The following is a 259-amino-acid chain: Dihydroorotate dehydrogenase B (NAD(+)), electron transfer subunit (259 aa).

One can recognise an FAD-binding FR-type domain in the interval 2 to 102; that stretch reads MQKQNMIVVN…LGPLGHGFPV (101 aa). FAD-binding positions include 53–56, 70–72, and 77–78; these read RPIS, LYR, and GT. Residues C221, C226, C229, and C246 each contribute to the [2Fe-2S] cluster site.

Belongs to the PyrK family. As to quaternary structure, heterotetramer of 2 PyrK and 2 PyrD type B subunits. [2Fe-2S] cluster is required as a cofactor. It depends on FAD as a cofactor.

It participates in pyrimidine metabolism; UMP biosynthesis via de novo pathway; orotate from (S)-dihydroorotate (NAD(+) route): step 1/1. In terms of biological role, responsible for channeling the electrons from the oxidation of dihydroorotate from the FMN redox center in the PyrD type B subunit to the ultimate electron acceptor NAD(+). The sequence is that of Dihydroorotate dehydrogenase B (NAD(+)), electron transfer subunit from Bacillus cereus (strain Q1).